The sequence spans 447 residues: N-succinylarginine dihydrolase (447 aa).

Substrate is bound by residues 19-28 (AGLSFGNEAS), Asn110, and 137-138 (HR). Glu174 is an active-site residue. Arg212 serves as a coordination point for substrate. His248 is an active-site residue. Residues Asp250 and Asn359 each coordinate substrate. The active-site Nucleophile is Cys365.

It belongs to the succinylarginine dihydrolase family. In terms of assembly, homodimer.

It catalyses the reaction N(2)-succinyl-L-arginine + 2 H2O + 2 H(+) = N(2)-succinyl-L-ornithine + 2 NH4(+) + CO2. It participates in amino-acid degradation; L-arginine degradation via AST pathway; L-glutamate and succinate from L-arginine: step 2/5. Its function is as follows. Catalyzes the hydrolysis of N(2)-succinylarginine into N(2)-succinylornithine, ammonia and CO(2). The polypeptide is N-succinylarginine dihydrolase (Salmonella enteritidis PT4 (strain P125109)).